The following is a 143-amino-acid chain: Nucleoside diphosphate kinase 2 (143 aa).

The ATP site is built by lysine 11, phenylalanine 59, arginine 87, threonine 93, arginine 104, and asparagine 114. Residue histidine 117 is the Pros-phosphohistidine intermediate of the active site.

The protein belongs to the NDK family. As to quaternary structure, homotetramer. Mg(2+) serves as cofactor.

It localises to the cytoplasm. The catalysed reaction is a 2'-deoxyribonucleoside 5'-diphosphate + ATP = a 2'-deoxyribonucleoside 5'-triphosphate + ADP. The enzyme catalyses a ribonucleoside 5'-diphosphate + ATP = a ribonucleoside 5'-triphosphate + ADP. Major role in the synthesis of nucleoside triphosphates other than ATP. The ATP gamma phosphate is transferred to the NDP beta phosphate via a ping-pong mechanism, using a phosphorylated active-site intermediate. In Protochlamydia amoebophila (strain UWE25), this protein is Nucleoside diphosphate kinase 2.